Here is a 474-residue protein sequence, read N- to C-terminus: tRNA-2-methylthio-N(6)-dimethylallyladenosine synthase (474 aa).

Positions Lys-3–Gly-120 constitute an MTTase N-terminal domain. Positions 12, 49, 83, 157, 161, and 164 each coordinate [4Fe-4S] cluster. Residues Arg-143–Arg-375 form the Radical SAM core domain. The TRAM domain occupies Arg-378–Arg-441.

This sequence belongs to the methylthiotransferase family. MiaB subfamily. Monomer. It depends on [4Fe-4S] cluster as a cofactor.

It is found in the cytoplasm. The catalysed reaction is N(6)-dimethylallyladenosine(37) in tRNA + (sulfur carrier)-SH + AH2 + 2 S-adenosyl-L-methionine = 2-methylsulfanyl-N(6)-dimethylallyladenosine(37) in tRNA + (sulfur carrier)-H + 5'-deoxyadenosine + L-methionine + A + S-adenosyl-L-homocysteine + 2 H(+). In terms of biological role, catalyzes the methylthiolation of N6-(dimethylallyl)adenosine (i(6)A), leading to the formation of 2-methylthio-N6-(dimethylallyl)adenosine (ms(2)i(6)A) at position 37 in tRNAs that read codons beginning with uridine. The chain is tRNA-2-methylthio-N(6)-dimethylallyladenosine synthase from Pectobacterium atrosepticum (strain SCRI 1043 / ATCC BAA-672) (Erwinia carotovora subsp. atroseptica).